Consider the following 333-residue polypeptide: 5-formaminoimidazole-4-carboxamide-1-(beta)-D-ribofuranosyl 5'-monophosphate synthetase (333 aa).

The 5-amino-1-(5-phospho-beta-D-ribosyl)imidazole-4-carboxamide site is built by His9 and Ser73. The 231-residue stretch at 94-324 (RNLFEWEANQ…ISREIKLAIN (231 aa)) folds into the ATP-grasp domain. ATP is bound by residues 124-184 (PEDI…VPMY) and Glu206. Asn230 serves as a coordination point for 5-amino-1-(5-phospho-beta-D-ribosyl)imidazole-4-carboxamide. Mg(2+) is bound by residues Glu269 and Glu282.

Belongs to the phosphohexose mutase family. Mg(2+) is required as a cofactor. Requires Mn(2+) as cofactor.

The catalysed reaction is 5-amino-1-(5-phospho-beta-D-ribosyl)imidazole-4-carboxamide + formate + ATP = 5-formamido-1-(5-phospho-D-ribosyl)imidazole-4-carboxamide + ADP + phosphate. Its pathway is purine metabolism; IMP biosynthesis via de novo pathway; 5-formamido-1-(5-phospho-D-ribosyl)imidazole-4-carboxamide from 5-amino-1-(5-phospho-D-ribosyl)imidazole-4-carboxamide (formate route): step 1/1. Functionally, catalyzes the ATP- and formate-dependent formylation of 5-aminoimidazole-4-carboxamide-1-beta-d-ribofuranosyl 5'-monophosphate (AICAR) to 5-formaminoimidazole-4-carboxamide-1-beta-d-ribofuranosyl 5'-monophosphate (FAICAR) in the absence of folates. The polypeptide is 5-formaminoimidazole-4-carboxamide-1-(beta)-D-ribofuranosyl 5'-monophosphate synthetase (Sulfurisphaera tokodaii (strain DSM 16993 / JCM 10545 / NBRC 100140 / 7) (Sulfolobus tokodaii)).